Reading from the N-terminus, the 304-residue chain is Acetyl-coenzyme A carboxylase carboxyl transferase subunit beta (304 aa).

In terms of domain architecture, CoA carboxyltransferase N-terminal spans 23 to 292 (VWTKCDSCGQ…PNPEAPREGV (270 aa)). Zn(2+) is bound by residues Cys-27, Cys-30, Cys-46, and Cys-49. The segment at 27 to 49 (CDSCGQVLYRAELERNLEVCPKC) adopts a C4-type zinc-finger fold. Residues 284–304 (NPEAPREGVVVPPVPDQEPEA) are disordered. The span at 295–304 (PPVPDQEPEA) shows a compositional bias: pro residues.

Belongs to the AccD/PCCB family. Acetyl-CoA carboxylase is a heterohexamer composed of biotin carboxyl carrier protein (AccB), biotin carboxylase (AccC) and two subunits each of ACCase subunit alpha (AccA) and ACCase subunit beta (AccD). It depends on Zn(2+) as a cofactor.

It localises to the cytoplasm. The catalysed reaction is N(6)-carboxybiotinyl-L-lysyl-[protein] + acetyl-CoA = N(6)-biotinyl-L-lysyl-[protein] + malonyl-CoA. It participates in lipid metabolism; malonyl-CoA biosynthesis; malonyl-CoA from acetyl-CoA: step 1/1. Its function is as follows. Component of the acetyl coenzyme A carboxylase (ACC) complex. Biotin carboxylase (BC) catalyzes the carboxylation of biotin on its carrier protein (BCCP) and then the CO(2) group is transferred by the transcarboxylase to acetyl-CoA to form malonyl-CoA. This Escherichia coli O139:H28 (strain E24377A / ETEC) protein is Acetyl-coenzyme A carboxylase carboxyl transferase subunit beta.